Here is a 328-residue protein sequence, read N- to C-terminus: LOB domain-containing protein 27 (328 aa).

The LOB domain occupies 35 to 136; the sequence is GACAACKYQR…EELKAVNSQL (102 aa).

The protein belongs to the LOB domain-containing protein family.

This chain is LOB domain-containing protein 27 (LBD27), found in Arabidopsis thaliana (Mouse-ear cress).